A 321-amino-acid chain; its full sequence is NADPH-dependent codeinone reductase 1-5 (321 aa).

The NADPH site is built by threonine 27 and aspartate 51. Residues tyrosine 56 and histidine 119 each act as proton donor in the active site. Substrate is bound at residue histidine 119. Residues glutamine 187, serine 214, leucine 216, serine 264, and arginine 269 each contribute to the NADPH site.

Belongs to the aldo/keto reductase family. In terms of tissue distribution, latex secreting cells (laticifer cells). Expressed constitutively and ubiquitously with highest levels in capsules.

The protein localises to the cytoplasm. It is found in the cytosol. The catalysed reaction is codeine + NADP(+) = codeinone + NADPH + H(+). It carries out the reaction neopine + NADP(+) = neopinone + NADPH + H(+). The enzyme catalyses morphine + NADP(+) = morphinone + NADPH + H(+). It catalyses the reaction neomorphine + NADP(+) = neomorphinone + NADPH + H(+). It participates in alkaloid biosynthesis; morphine biosynthesis. Functionally, NADPH-dependent codeinone reductase involved in biosynthesis of morphinan-type benzylisoquinoline and opiate alkaloids natural products. Reduces codeinone to codeine in the penultimate step in morphine biosynthesis. Can use morphinone, hydrocodone and hydromorphone as substrate during reductive reaction with NADPH as cofactor, and morphine and dihydrocodeine as substrate during oxidative reaction with NADP as cofactor. Converts morphinone to morphine, and neomorphinone to neomorphine. Reduces irreversibly neopinone, a spontaneous isomer of codeinone, to neopine; in planta, neopine levels are limited to low levels. The protein is NADPH-dependent codeinone reductase 1-5 of Papaver somniferum (Opium poppy).